The primary structure comprises 323 residues: NADH-ubiquinone oxidoreductase chain 1 (323 aa).

9 consecutive transmembrane segments (helical) span residues 10–30, 52–72, 84–104, 119–139, 157–177, 189–209, 245–265, 268–288, and 302–322; these read LLYI…GLLI, PNVV…KLVL, IIYA…WSVI, VIFI…AGWA, VSYE…AGTV, VWFI…ALAE, YANI…GIVS, ISGA…RATL, and KSLL…VLII.

Belongs to the complex I subunit 1 family.

Its subcellular location is the mitochondrion inner membrane. It carries out the reaction a ubiquinone + NADH + 5 H(+)(in) = a ubiquinol + NAD(+) + 4 H(+)(out). Its function is as follows. Core subunit of the mitochondrial membrane respiratory chain NADH dehydrogenase (Complex I) that is believed to belong to the minimal assembly required for catalysis. Complex I functions in the transfer of electrons from NADH to the respiratory chain. The immediate electron acceptor for the enzyme is believed to be ubiquinone. In Dictyostelium citrinum (Slime mold), this protein is NADH-ubiquinone oxidoreductase chain 1 (nad1).